Here is a 399-residue protein sequence, read N- to C-terminus: NADH-quinone oxidoreductase subunit D 2 (399 aa).

A disordered region spans residues M1–L20. A compositionally biased stretch (low complexity) spans S9–L20.

Belongs to the complex I 49 kDa subunit family. NDH-1 is composed of 14 different subunits. Subunits NuoB, C, D, E, F, and G constitute the peripheral sector of the complex.

The protein localises to the cell inner membrane. The enzyme catalyses a quinone + NADH + 5 H(+)(in) = a quinol + NAD(+) + 4 H(+)(out). Its function is as follows. NDH-1 shuttles electrons from NADH, via FMN and iron-sulfur (Fe-S) centers, to quinones in the respiratory chain. The immediate electron acceptor for the enzyme in this species is believed to be ubiquinone. Couples the redox reaction to proton translocation (for every two electrons transferred, four hydrogen ions are translocated across the cytoplasmic membrane), and thus conserves the redox energy in a proton gradient. This chain is NADH-quinone oxidoreductase subunit D 2, found in Opitutus terrae (strain DSM 11246 / JCM 15787 / PB90-1).